Consider the following 114-residue polypeptide: ATP synthase subunit c (114 aa).

2 helical membrane-spanning segments follow: residues 31–51 (AVFY…AAGG) and 88–108 (IETF…TGIF).

It belongs to the ATPase C chain family. In terms of assembly, F-type ATPases have 2 components, F(1) - the catalytic core - and F(0) - the membrane proton channel. F(1) has five subunits: alpha(3), beta(3), gamma(1), delta(1), epsilon(1). F(0) has three main subunits: a(1), b(2) and c(10-14). The alpha and beta chains form an alternating ring which encloses part of the gamma chain. F(1) is attached to F(0) by a central stalk formed by the gamma and epsilon chains, while a peripheral stalk is formed by the delta and b chains.

The protein resides in the cell inner membrane. In terms of biological role, f(1)F(0) ATP synthase produces ATP from ADP in the presence of a proton or sodium gradient. F-type ATPases consist of two structural domains, F(1) containing the extramembraneous catalytic core and F(0) containing the membrane proton channel, linked together by a central stalk and a peripheral stalk. During catalysis, ATP synthesis in the catalytic domain of F(1) is coupled via a rotary mechanism of the central stalk subunits to proton translocation. Functionally, key component of the F(0) channel; it plays a direct role in translocation across the membrane. A homomeric c-ring of between 10-14 subunits forms the central stalk rotor element with the F(1) delta and epsilon subunits. The protein is ATP synthase subunit c of Sulfurihydrogenibium sp. (strain YO3AOP1).